A 309-amino-acid chain; its full sequence is MAHLFTLSELSVTEIIRLLEDAEQFRKGHFWRPPEPMFIANLFFEPSTRTKCSFEMAERKLGLHVIPFDADMSSVQKGETLYDTVRTLEAIGVNALVIRHSQDAYFEELRHTVRTPIINAGDGCGHHPTQSLLDLLTIRQEFGTFAGLTAAIIGDIRHSRVARSNAEVLTRLGAKVLFSSPEEWKDEANPYGTYVDIDTAVAEADVIMLLRIQHERHAEKMGLTKEQYHERYGLTIKRAKKMKANSIILHPAPVNRDVEIESSLVESERSRIFKQMENGVYVRMAVLKRAIEEGRMANGNYFEKWQVVQ.

Carbamoyl phosphate-binding residues include arginine 49 and threonine 50. Residue lysine 77 coordinates L-aspartate. Positions 99, 127, and 130 each coordinate carbamoyl phosphate. Positions 160 and 211 each coordinate L-aspartate. Carbamoyl phosphate contacts are provided by alanine 252 and proline 253.

This sequence belongs to the aspartate/ornithine carbamoyltransferase superfamily. ATCase family. Heterododecamer (2C3:3R2) of six catalytic PyrB chains organized as two trimers (C3), and six regulatory PyrI chains organized as three dimers (R2).

The enzyme catalyses carbamoyl phosphate + L-aspartate = N-carbamoyl-L-aspartate + phosphate + H(+). The protein operates within pyrimidine metabolism; UMP biosynthesis via de novo pathway; (S)-dihydroorotate from bicarbonate: step 2/3. In terms of biological role, catalyzes the condensation of carbamoyl phosphate and aspartate to form carbamoyl aspartate and inorganic phosphate, the committed step in the de novo pyrimidine nucleotide biosynthesis pathway. This Geobacillus sp. (strain WCH70) protein is Aspartate carbamoyltransferase catalytic subunit.